A 200-amino-acid polypeptide reads, in one-letter code: Molybdenum cofactor guanylyltransferase (200 aa).

GTP contacts are provided by residues 15–17 (LAG), Lys-28, Asp-74, and Asp-104. Asp-104 provides a ligand contact to Mg(2+).

Belongs to the MobA family. In terms of assembly, monomer. Mg(2+) serves as cofactor.

It localises to the cytoplasm. The catalysed reaction is Mo-molybdopterin + GTP + H(+) = Mo-molybdopterin guanine dinucleotide + diphosphate. Functionally, transfers a GMP moiety from GTP to Mo-molybdopterin (Mo-MPT) cofactor (Moco or molybdenum cofactor) to form Mo-molybdopterin guanine dinucleotide (Mo-MGD) cofactor. In Pseudomonas fluorescens (strain Pf0-1), this protein is Molybdenum cofactor guanylyltransferase.